The primary structure comprises 875 residues: Protein SEY1 (875 aa).

At 1–749 (MVANGHFASN…KRSAIGGITQ (749 aa)) the chain is on the cytoplasmic side. Positions 49-307 (GFNYHLISVF…IPADGFAVYA (259 aa)) constitute a GB1/RHD3-type G domain. 59–66 (GSQSTGKS) is a binding site for GTP. Residues 482 to 506 (SNYQQELSLYQKDLERISGQLRRDE) are a coiled coil. The disordered stretch occupies residues 676-704 (LDKWIGHTPSSATPADEEDLTPIGGVDED). Over residues 690 to 704 (ADEEDLTPIGGVDED) the composition is skewed to acidic residues. A helical membrane pass occupies residues 750 to 770 (VPLYFYGLLLALGWNEIMAVL). Topologically, residues 771–773 (RNP) are lumenal. A helical transmembrane segment spans residues 774–794 (AYFFLLFVCAIGAYVTYQLNL). The Cytoplasmic portion of the chain corresponds to 795 to 875 (WGPIIKMTEA…ADDDDVDDDF (81 aa)). A disordered region spans residues 831 to 875 (MAMSGARNATEEHEMSNLNRKSGERGGQKYRGEDVADDDDVDDDF). The segment covering 839–864 (ATEEHEMSNLNRKSGERGGQKYRGED) has biased composition (basic and acidic residues). Residues 865–875 (VADDDDVDDDF) show a composition bias toward acidic residues.

The protein belongs to the TRAFAC class dynamin-like GTPase superfamily. GB1/RHD3 GTPase family. RHD3 subfamily.

It localises to the endoplasmic reticulum membrane. Functionally, cooperates with the reticulon proteins and tubule-shaping DP1 family proteins to generate and maintain the structure of the tubular endoplasmic reticulum network. Has GTPase activity, which is required for its function in ER organization. This chain is Protein SEY1, found in Ajellomyces dermatitidis (strain ER-3 / ATCC MYA-2586) (Blastomyces dermatitidis).